The following is a 303-amino-acid chain: Mycothiol acetyltransferase (303 aa).

Asp-33 provides a ligand contact to 1D-myo-inositol 2-(L-cysteinylamino)-2-deoxy-alpha-D-glucopyranoside. Acetyl-CoA contacts are provided by residues 78-80 (VVV) and 86-91 (RRGTGS). The region spanning 150–303 (VRFATYSGPH…AYAAVAPTDV (154 aa)) is the N-acetyltransferase domain. 1D-myo-inositol 2-(L-cysteinylamino)-2-deoxy-alpha-D-glucopyranoside is bound by residues Glu-177, Lys-218, and Glu-226. Acetyl-CoA is bound at residue 230–232 (VGV). 1D-myo-inositol 2-(L-cysteinylamino)-2-deoxy-alpha-D-glucopyranoside is bound at residue Tyr-269. 274–279 (NTAAVK) lines the acetyl-CoA pocket.

The protein belongs to the acetyltransferase family. MshD subfamily. In terms of assembly, monomer.

It carries out the reaction 1D-myo-inositol 2-(L-cysteinylamino)-2-deoxy-alpha-D-glucopyranoside + acetyl-CoA = mycothiol + CoA + H(+). Its function is as follows. Catalyzes the transfer of acetyl from acetyl-CoA to desacetylmycothiol (Cys-GlcN-Ins) to form mycothiol. This chain is Mycothiol acetyltransferase, found in Mycolicibacterium gilvum (strain PYR-GCK) (Mycobacterium gilvum (strain PYR-GCK)).